A 452-amino-acid chain; its full sequence is Ribosomal L1 domain-containing protein 1 (452 aa).

The residue at position 1 (Met-1) is an N-acetylmethionine. Residues Lys-119 and Lys-253 each participate in a glycyl lysine isopeptide (Lys-Gly) (interchain with G-Cter in SUMO2) cross-link. Residues 277–350 are a coiled coil; that stretch reads LRSLRKQELK…QKVTEECEEA (74 aa). A disordered region spans residues 283–452; the sequence is QELKKRKREN…DKKTKAAHSN (170 aa). The span at 292–301 shows a compositional bias: basic and acidic residues; that stretch reads NAKLKKESKM. Residues 309–319 are compositionally biased toward polar residues; the sequence is ATSLLTQSGLA. Positions 330 to 341 are enriched in basic residues; that stretch reads QKKKTNKAHKKQ. Thr-334, Thr-344, Thr-360, Thr-399, and Thr-407 each carry phosphothreonine. Residues 414–423 are compositionally biased toward basic and acidic residues; sequence KDVQEFRKPE. The segment covering 425 to 440 has biased composition (polar residues); sequence SSFSTPRKSGKKASNT. Thr-429 is modified (phosphothreonine). Lys-432 carries the N6-acetyllysine modification. A Phosphoserine modification is found at Ser-433.

It belongs to the universal ribosomal protein uL1 family. Highly divergent. Interacts with ING1. Interacts with KPNA7 and KPNA2.

It is found in the nucleus. The protein localises to the nucleolus. In terms of biological role, regulates cellular senescence through inhibition of PTEN translation. Acts as a pro-apoptotic regulator in response to DNA damage. This is Ribosomal L1 domain-containing protein 1 from Mus musculus (Mouse).